Here is a 198-residue protein sequence, read N- to C-terminus: Recombination protein RecR (198 aa).

The C4-type zinc-finger motif lies at 59–74 (CSLCCNYTDHDPCPIC). Residues 82–175 (TLLCIVEQPR…KVTRIAHGLP (94 aa)) form the Toprim domain.

It belongs to the RecR family.

Functionally, may play a role in DNA repair. It seems to be involved in an RecBC-independent recombinational process of DNA repair. It may act with RecF and RecO. The protein is Recombination protein RecR of Desulfitobacterium hafniense (strain Y51).